A 203-amino-acid chain; its full sequence is Urease accessory protein UreG (203 aa).

14–21 (GPVGAGKT) serves as a coordination point for GTP.

It belongs to the SIMIBI class G3E GTPase family. UreG subfamily. In terms of assembly, homodimer. UreD, UreF and UreG form a complex that acts as a GTP-hydrolysis-dependent molecular chaperone, activating the urease apoprotein by helping to assemble the nickel containing metallocenter of UreC. The UreE protein probably delivers the nickel.

It is found in the cytoplasm. In terms of biological role, facilitates the functional incorporation of the urease nickel metallocenter. This process requires GTP hydrolysis, probably effectuated by UreG. The sequence is that of Urease accessory protein UreG from Jannaschia sp. (strain CCS1).